The primary structure comprises 255 residues: Proteasome subunit alpha type-3 (255 aa).

Residue Ser-2 is modified to N-acetylserine. 3 positions are modified to N6-acetyllysine: Lys-57, Lys-206, and Lys-230. Ser-243 and Ser-250 each carry phosphoserine.

Belongs to the peptidase T1A family. As to quaternary structure, the 26S proteasome consists of a 20S proteasome core and two 19S regulatory subunits. The 20S proteasome core is a barrel-shaped complex made of 28 subunits that are arranged in four stacked rings. The two outer rings are each formed by seven alpha subunits, and the two inner rings are formed by seven beta subunits. The proteolytic activity is exerted by three beta-subunits PSMB5, PSMB6 and PSMB7. Interacts with AURKB. Interacts with CDKN1A. Interacts with MDM2 and RB1. Interacts with the C-terminus of TBXA2R isoform 2. Interacts with DNAJB2. In terms of tissue distribution, detected in liver (at protein level).

The protein localises to the cytoplasm. It localises to the nucleus. In terms of biological role, component of the 20S core proteasome complex involved in the proteolytic degradation of most intracellular proteins. This complex plays numerous essential roles within the cell by associating with different regulatory particles. Associated with two 19S regulatory particles, forms the 26S proteasome and thus participates in the ATP-dependent degradation of ubiquitinated proteins. The 26S proteasome plays a key role in the maintenance of protein homeostasis by removing misfolded or damaged proteins that could impair cellular functions, and by removing proteins whose functions are no longer required. Associated with the PA200 or PA28, the 20S proteasome mediates ubiquitin-independent protein degradation. This type of proteolysis is required in several pathways including spermatogenesis (20S-PA200 complex) or generation of a subset of MHC class I-presented antigenic peptides (20S-PA28 complex). Binds to the C-terminus of CDKN1A and thereby mediates its degradation. Negatively regulates the membrane trafficking of the cell-surface thromboxane A2 receptor (TBXA2R) isoform 2. This is Proteasome subunit alpha type-3 (Psma3) from Mus musculus (Mouse).